The sequence spans 200 residues: Small ribosomal subunit protein uS4 (200 aa).

The region spanning 92-155 (SRLDAVVYSL…QNLDIIKESV (64 aa)) is the S4 RNA-binding domain.

The protein belongs to the universal ribosomal protein uS4 family. As to quaternary structure, part of the 30S ribosomal subunit. Contacts protein S5. The interaction surface between S4 and S5 is involved in control of translational fidelity.

In terms of biological role, one of the primary rRNA binding proteins, it binds directly to 16S rRNA where it nucleates assembly of the body of the 30S subunit. Functionally, with S5 and S12 plays an important role in translational accuracy. The sequence is that of Small ribosomal subunit protein uS4 from Staphylococcus epidermidis (strain ATCC 35984 / DSM 28319 / BCRC 17069 / CCUG 31568 / BM 3577 / RP62A).